A 1073-amino-acid chain; its full sequence is Duffy receptor alpha form (1073 aa).

Positions 1-21 (MEGKKKRPLFFLLVLLLSHKA) are cleaved as a signal peptide. Residues 22 to 1007 (NNVLFERMNG…YECFTKGSST (986 aa)) are Extracellular-facing. 3 N-linked (GlcNAc...) asparagine glycosylation sites follow: N134, N179, and N202. 2 disulfide bridges follow: C214/C243 and C227/C234. N-linked (GlcNAc...) asparagine glycans are attached at residues N252 and N348. Disulfide bonds link C297–C374, C412–C429, C424–C504, and C433–C502. Residues 517–915 (VKNVGSGVES…LNNRKLNRDQ (399 aa)) are disordered. Residues 528–543 (AASSNPITEAVKSSSG) are compositionally biased toward polar residues. The span at 546–561 (KVQEDSAHKSVNKGEG) shows a compositional bias: basic and acidic residues. Residues 562-576 (KSSTNEADPGSQSGA) show a composition bias toward polar residues. Basic and acidic residues-rich tracts occupy residues 675-710 (GEVHNGTDTEPKEDGEKADPQKDIEVKGKQDTDDRS) and 717-734 (HTDERATLGETHMEKDTE). N-linked (GlcNAc...) asparagine glycosylation is present at N679. The segment covering 736–766 (AGGSTLTPEQNVSVASDNGNVPGSGNKQNEG) has biased composition (polar residues). 3 N-linked (GlcNAc...) asparagine glycosylation sites follow: N746, N779, and N788. Basic and acidic residues predominate over residues 799-810 (GNEKDFQKHDFM). 2 stretches are compositionally biased toward low complexity: residues 821 to 843 (SDHTSSDQTSSDHTSSDQTSSDH) and 851 to 864 (SDQTSSDQTSSDQT). Residues 867 to 891 (TEGHHRDNVRNPEIKSSEDMSKGDF) are compositionally biased toward basic and acidic residues. A compositionally biased stretch (polar residues) spans 893-909 (RNSNSNELYSHNNLNNR). Residues 1008-1029 (GIVYFATGGAFLIILLLFASWN) form a helical membrane-spanning segment. At 1030–1073 (AASNDYEEEATFDEFVEYSDDIHRTPLMPNDIEHMQQFTPLDYS) the chain is on the cytoplasmic side.

In terms of assembly, interacts (via region II) with human ACKR1 (via N-terminal extracellular domain). Interacts (via region II) with rhesus macaque ACKR1 (via N-terminal extracellular domain).

Its subcellular location is the cell membrane. It localises to the cytoplasmic vesicle. It is found in the secretory vesicle. The protein resides in the microneme. In terms of biological role, binds to the human erythrocyte Duffy blood group determinant (ACKR1). Binds to the rhesus macaque erythrocyte Duffy blood group determinant (ACKR1). This chain is Duffy receptor alpha form, found in Plasmodium knowlesi.